Here is a 95-residue protein sequence, read N- to C-terminus: Large ribosomal subunit protein eL37x (95 aa).

Cys-19, Cys-22, Cys-34, and Cys-37 together coordinate Zn(2+). A C4-type zinc finger spans residues 19–37 (CVRCGRRSFHIQKSRCSAC). The interval 73-95 (RFKTGFREGTEAKPRSKASASSA) is disordered. A compositionally biased stretch (basic and acidic residues) spans 77–86 (GFREGTEAKP).

The protein belongs to the eukaryotic ribosomal protein eL37 family. The cofactor is Zn(2+).

In terms of biological role, binds to the 23S rRNA. The sequence is that of Large ribosomal subunit protein eL37x (RPL37C) from Arabidopsis thaliana (Mouse-ear cress).